Consider the following 116-residue polypeptide: Fluoride-specific ion channel FluC 1 (116 aa).

The next 4 membrane-spanning stretches (helical) occupy residues 1–21 (MGKL…RYTV), 31–51 (IPAG…FLTF), 58–78 (MVYL…TFAY), and 92–112 (FFLN…IAYL). Residues Gly-68 and Thr-71 each coordinate Na(+).

Belongs to the fluoride channel Fluc/FEX (TC 1.A.43) family.

The protein resides in the cell membrane. The enzyme catalyses fluoride(in) = fluoride(out). With respect to regulation, na(+) is not transported, but it plays an essential structural role and its presence is essential for fluoride channel function. In terms of biological role, fluoride-specific ion channel. Important for reducing fluoride concentration in the cell, thus reducing its toxicity. The sequence is that of Fluoride-specific ion channel FluC 1 from Methanosarcina barkeri (strain Fusaro / DSM 804).